Here is a 619-residue protein sequence, read N- to C-terminus: Type VI secretion system component TssF1 (619 aa).

As to quaternary structure, interacts with TssA1.

Core component of the H1 type VI (H1-T6SS) secretion system that plays a role in the release of toxins targeting both eukaryotic and prokaryotic species. In Pseudomonas aeruginosa (strain ATCC 15692 / DSM 22644 / CIP 104116 / JCM 14847 / LMG 12228 / 1C / PRS 101 / PAO1), this protein is Type VI secretion system component TssF1.